The primary structure comprises 115 residues: Large ribosomal subunit protein bL19 (115 aa).

It belongs to the bacterial ribosomal protein bL19 family.

Functionally, this protein is located at the 30S-50S ribosomal subunit interface and may play a role in the structure and function of the aminoacyl-tRNA binding site. The sequence is that of Large ribosomal subunit protein bL19 from Streptococcus mutans serotype c (strain ATCC 700610 / UA159).